Here is a 353-residue protein sequence, read N- to C-terminus: Photosystem II protein D1 (353 aa).

Thr2 bears the N-acetylthreonine mark. Thr2 carries the phosphothreonine modification. 3 helical membrane-spanning segments follow: residues 29–46 (NIGW…TATS), 118–133 (HFLL…EWEL), and 142–156 (WIAV…AATA). His118 provides a ligand contact to chlorophyll a. Tyr126 contributes to the pheophytin a binding site. [CaMn4O5] cluster-binding residues include Asp170 and Glu189. Residues 197–218 (FHMLGVAGVFGGSLFSAMHGSL) form a helical membrane-spanning segment. His198 contacts chlorophyll a. A quinone-binding positions include His215 and 264-265 (SF). Fe cation is bound at residue His215. His272 is a binding site for Fe cation. Residues 274–288 (FLAAWPVVGIWFTAL) traverse the membrane as a helical segment. His332, Glu333, Asp342, and Ala344 together coordinate [CaMn4O5] cluster. A propeptide spanning residues 345–353 (AVEAPAVNG) is cleaved from the precursor.

It belongs to the reaction center PufL/M/PsbA/D family. PSII is composed of 1 copy each of membrane proteins PsbA, PsbB, PsbC, PsbD, PsbE, PsbF, PsbH, PsbI, PsbJ, PsbK, PsbL, PsbM, PsbT, PsbX, PsbY, PsbZ, Psb30/Ycf12, at least 3 peripheral proteins of the oxygen-evolving complex and a large number of cofactors. It forms dimeric complexes. The cofactor is The D1/D2 heterodimer binds P680, chlorophylls that are the primary electron donor of PSII, and subsequent electron acceptors. It shares a non-heme iron and each subunit binds pheophytin, quinone, additional chlorophylls, carotenoids and lipids. D1 provides most of the ligands for the Mn4-Ca-O5 cluster of the oxygen-evolving complex (OEC). There is also a Cl(-1) ion associated with D1 and D2, which is required for oxygen evolution. The PSII complex binds additional chlorophylls, carotenoids and specific lipids.. Tyr-161 forms a radical intermediate that is referred to as redox-active TyrZ, YZ or Y-Z. Post-translationally, C-terminally processed by CTPA; processing is essential to allow assembly of the oxygen-evolving complex and thus photosynthetic growth.

Its subcellular location is the plastid. The protein localises to the chloroplast thylakoid membrane. The catalysed reaction is 2 a plastoquinone + 4 hnu + 2 H2O = 2 a plastoquinol + O2. Functionally, photosystem II (PSII) is a light-driven water:plastoquinone oxidoreductase that uses light energy to abstract electrons from H(2)O, generating O(2) and a proton gradient subsequently used for ATP formation. It consists of a core antenna complex that captures photons, and an electron transfer chain that converts photonic excitation into a charge separation. The D1/D2 (PsbA/PsbD) reaction center heterodimer binds P680, the primary electron donor of PSII as well as several subsequent electron acceptors. The protein is Photosystem II protein D1 of Dumortiera hirsuta (Liverwort).